Consider the following 491-residue polypeptide: Probable glycogen synthase 2 (491 aa).

Position 15 (Lys15) interacts with ADP-alpha-D-glucose.

This sequence belongs to the glycosyltransferase 1 family. Bacterial/plant glycogen synthase subfamily.

It catalyses the reaction [(1-&gt;4)-alpha-D-glucosyl](n) + ADP-alpha-D-glucose = [(1-&gt;4)-alpha-D-glucosyl](n+1) + ADP + H(+). Its pathway is glycan biosynthesis; glycogen biosynthesis. Functionally, synthesizes alpha-1,4-glucan chains using ADP-glucose. This is Probable glycogen synthase 2 (glgA2) from Synechocystis sp. (strain ATCC 27184 / PCC 6803 / Kazusa).